A 226-amino-acid polypeptide reads, in one-letter code: Agamous-like MADS-box protein AGL23 (226 aa).

One can recognise an MADS-box domain in the interval 6–66; that stretch reads LGRRKVEIVK…GKVFSFGHPN (61 aa). The stretch at 95-132 forms a coiled coil; sequence VQMLNKSYTEVKAEVEKEQKNKQSRAQNERENENAEEW. The span at 108 to 127 shows a compositional bias: basic and acidic residues; it reads EVEKEQKNKQSRAQNERENE. The disordered stretch occupies residues 108–131; sequence EVEKEQKNKQSRAQNERENENAEE.

The protein resides in the nucleus. In terms of biological role, probable transcription factor that controls female gametophyte (megagametogenesis) development and chloroplast biogenesis during embryo development. The sequence is that of Agamous-like MADS-box protein AGL23 from Arabidopsis thaliana (Mouse-ear cress).